We begin with the raw amino-acid sequence, 132 residues long: Ribosome-binding factor A (132 aa).

Residues 113 to 132 (EANSTRAKDDDEADAPAKDD) form a disordered region.

It belongs to the RbfA family. As to quaternary structure, monomer. Binds 30S ribosomal subunits, but not 50S ribosomal subunits or 70S ribosomes.

The protein localises to the cytoplasm. Its function is as follows. One of several proteins that assist in the late maturation steps of the functional core of the 30S ribosomal subunit. Associates with free 30S ribosomal subunits (but not with 30S subunits that are part of 70S ribosomes or polysomes). Required for efficient processing of 16S rRNA. May interact with the 5'-terminal helix region of 16S rRNA. The sequence is that of Ribosome-binding factor A from Burkholderia ambifaria (strain MC40-6).